The primary structure comprises 430 residues: Asparagine--tRNA ligase (430 aa).

It belongs to the class-II aminoacyl-tRNA synthetase family. In terms of assembly, homodimer.

The protein localises to the cytoplasm. The enzyme catalyses tRNA(Asn) + L-asparagine + ATP = L-asparaginyl-tRNA(Asn) + AMP + diphosphate + H(+). This is Asparagine--tRNA ligase from Staphylococcus aureus (strain USA300).